The sequence spans 130 residues: Galectin-2 (130 aa).

The region spanning 4 to 130 is the Galectin domain; it reads KFEVKDLNMK…GLQISSFKLE (127 aa). 65–71 provides a ligand contact to a beta-D-galactoside; that stretch reads WGQEQRE.

In terms of assembly, homodimer.

In terms of biological role, this protein binds beta-galactoside. Its physiological function is not yet known. The protein is Galectin-2 (Lgals2) of Mus musculus (Mouse).